The chain runs to 109 residues: MSQIAQEMTVSLRNARTQLDMVNQQLAYLDRQEKLAELTKKELESYPTDKVWRSCGKSFILQDKSKYVNDLSHDETVLLDQRKTLKIKKNYLETTVEKTIDNLKALMKN.

Ser-2 carries the post-translational modification N-acetylserine.

This sequence belongs to the prefoldin subunit beta family. As to quaternary structure, heterohexamer of two PFD-alpha type and four PFD-beta type subunits.

It localises to the cytoplasm. In terms of biological role, binds specifically to cytosolic chaperonin (c-CPN) and transfers target proteins to it. Binds to nascent polypeptide chain and promotes folding in an environment in which there are many competing pathways for nonnative proteins. This Saccharomyces cerevisiae (strain ATCC 204508 / S288c) (Baker's yeast) protein is Prefoldin subunit 1 (PFD1).